A 342-amino-acid polypeptide reads, in one-letter code: Anthranilate phosphoribosyltransferase (342 aa).

5-phospho-alpha-D-ribose 1-diphosphate is bound by residues Gly83, 86–87 (GD), Thr91, 93–96 (NIST), 111–119 (KHGNRGVSS), and Ser123. Gly83 is a binding site for anthranilate. Ser95 is a binding site for Mg(2+). Asn114 contacts anthranilate. Arg169 is a binding site for anthranilate. Mg(2+) is bound by residues Asp228 and Glu229.

Belongs to the anthranilate phosphoribosyltransferase family. As to quaternary structure, homodimer. It depends on Mg(2+) as a cofactor.

The enzyme catalyses N-(5-phospho-beta-D-ribosyl)anthranilate + diphosphate = 5-phospho-alpha-D-ribose 1-diphosphate + anthranilate. It participates in amino-acid biosynthesis; L-tryptophan biosynthesis; L-tryptophan from chorismate: step 2/5. Catalyzes the transfer of the phosphoribosyl group of 5-phosphorylribose-1-pyrophosphate (PRPP) to anthranilate to yield N-(5'-phosphoribosyl)-anthranilate (PRA). The sequence is that of Anthranilate phosphoribosyltransferase from Paraburkholderia phymatum (strain DSM 17167 / CIP 108236 / LMG 21445 / STM815) (Burkholderia phymatum).